The primary structure comprises 264 residues: uncharacterized protein (264 aa).

Residues 1–22 (MKSIKRIGLCISLLILIIFVTS) form the signal peptide. Cys-23 carries the N-palmitoyl cysteine lipid modification. The S-diacylglycerol cysteine moiety is linked to residue Cys-23.

Belongs to the staphylococcal tandem lipoprotein family.

The protein resides in the cell membrane. This is an uncharacterized protein from Staphylococcus aureus (strain MRSA252).